A 273-amino-acid chain; its full sequence is Translation initiation factor IF-3, mitochondrial (273 aa).

Residues 1 to 32 (MAALFLKKLTLQTVKTENYCIRRCLGKYILQG) constitute a mitochondrion transit peptide. The propeptide at 33–92 (PAPTQQPPRPSCLIHAKAFSTEDTQDEMTKKKKNETAFSSVGRKINERIIHVLDEQGNDL) is removed in mature form. The segment at 242-273 (EEAAWKAAPDTPRRDALNGGDGKDGASGVLPQ) is disordered. Residues 252–265 (TPRRDALNGGDGKD) show a composition bias toward basic and acidic residues.

This sequence belongs to the IF-3 family.

The protein resides in the mitochondrion. In terms of biological role, IF-3 binds to the 28S ribosomal subunit and shifts the equilibrium between 55S ribosomes and their 39S and 28S subunits in favor of the free subunits, thus enhancing the availability of 28S subunits on which protein synthesis initiation begins. In Bos taurus (Bovine), this protein is Translation initiation factor IF-3, mitochondrial (MTIF3).